Reading from the N-terminus, the 271-residue chain is Phosphate import ATP-binding protein PstB 1 (271 aa).

One can recognise an ABC transporter domain in the interval 24-266 (MIGKDVSVYY…PDDPRTQDYI (243 aa)). 56-63 (GPSGCGKS) is a binding site for ATP.

It belongs to the ABC transporter superfamily. Phosphate importer (TC 3.A.1.7) family. The complex is composed of two ATP-binding proteins (PstB), two transmembrane proteins (PstC and PstA) and a solute-binding protein (PstS).

Its subcellular location is the cell inner membrane. It carries out the reaction phosphate(out) + ATP + H2O = ADP + 2 phosphate(in) + H(+). Functionally, part of the ABC transporter complex PstSACB involved in phosphate import. Responsible for energy coupling to the transport system. This chain is Phosphate import ATP-binding protein PstB 1, found in Rhizobium johnstonii (strain DSM 114642 / LMG 32736 / 3841) (Rhizobium leguminosarum bv. viciae).